Here is a 315-residue protein sequence, read N- to C-terminus: Glycine--tRNA ligase alpha subunit (315 aa).

The protein belongs to the class-II aminoacyl-tRNA synthetase family. Tetramer of two alpha and two beta subunits.

It is found in the cytoplasm. The enzyme catalyses tRNA(Gly) + glycine + ATP = glycyl-tRNA(Gly) + AMP + diphosphate. This is Glycine--tRNA ligase alpha subunit from Pseudomonas putida (strain GB-1).